A 315-amino-acid polypeptide reads, in one-letter code: tRNA dimethylallyltransferase (315 aa).

14 to 21 serves as a coordination point for ATP; sequence GPTASGKT. 16–21 lines the substrate pocket; sequence TASGKT. Interaction with substrate tRNA regions lie at residues 39–42, 163–167, and 248–253; these read DSAL, QRIQR, and RCVGYR.

The protein belongs to the IPP transferase family. In terms of assembly, monomer. Mg(2+) is required as a cofactor.

It carries out the reaction adenosine(37) in tRNA + dimethylallyl diphosphate = N(6)-dimethylallyladenosine(37) in tRNA + diphosphate. Catalyzes the transfer of a dimethylallyl group onto the adenine at position 37 in tRNAs that read codons beginning with uridine, leading to the formation of N6-(dimethylallyl)adenosine (i(6)A). The protein is tRNA dimethylallyltransferase of Paraburkholderia phytofirmans (strain DSM 17436 / LMG 22146 / PsJN) (Burkholderia phytofirmans).